The following is a 431-amino-acid chain: Protein EARLY STARVATION 1, chloroplastic (431 aa).

Residues 1-19 constitute a chloroplast transit peptide; sequence MAACSRGLVARPFDLTARG. Disordered stretches follow at residues 65 to 126 and 403 to 431; these read GNKP…DTGI and GVYP…SPLE. Residues 415–431 are compositionally biased toward pro residues; the sequence is PAPPSDDPPGMPPSPLE.

Belongs to the ESV1 family.

It localises to the plastid. The protein resides in the chloroplast stroma. Functionally, binds preferentially to highly ordered alpha-glucans, such as starch and crystalline maltodextrins. Involved in the organization of the starch granule matrix, thus influencing starch turnover by modulating the accessibility of starch polymers to modifying and degrading enzymes. Required for the control of starch degradation in leaves and starch distribution in nonphotosynthetic parts. Promotes gravitropic responses, negative in shoots but positive in roots, by facilitating starch granules (statoliths) formation in hypocotyls and roots columella. Facilitates tight packing of starch granules in grains. This Oryza sativa subsp. japonica (Rice) protein is Protein EARLY STARVATION 1, chloroplastic.